A 529-amino-acid chain; its full sequence is Neuronal acetylcholine receptor subunit alpha-2 (529 aa).

The signal sequence occupies residues 1 to 26; sequence MGPSCPVFLSFTKLSLWWLLLTPAGG. Residues 27 to 56 form a disordered region; that stretch reads EEAKRPPPRAPGDPLSSPSPTALPQGGSHT. Residues 27–264 lie on the Extracellular side of the membrane; sequence EEAKRPPPRA…VTYAFVIRRL (238 aa). Residues Asn-79 and Asn-129 are each glycosylated (N-linked (GlcNAc...) asparagine). Cys-183 and Cys-197 form a disulfide bridge. N-linked (GlcNAc...) asparagine glycosylation occurs at Asn-235. A disulfide bridge links Cys-247 with Cys-248. The next 3 membrane-spanning stretches (helical) occupy residues 265–289, 297–315, and 331–352; these read PLFY…VFYL, ITLC…LLIT, and YLLF…VLNV. Residues 353-502 are Cytoplasmic-facing; sequence HHRSPSTHTM…WKYVAMVIDR (150 aa). Residues 503-521 traverse the membrane as a helical segment; it reads IFLWLFIIVCFLGTIGLFL.

Belongs to the ligand-gated ion channel (TC 1.A.9) family. Acetylcholine receptor (TC 1.A.9.1) subfamily. Alpha-2/CHRNA2 sub-subfamily. In terms of assembly, neuronal AChR is composed of two different types of subunits: alpha and non-alpha (beta). CHRNA2/alpha-2 subunit can be combined to CHRNB2/beta-2 or CHRNB4/beta-4 to give rise to functional receptors. Both CHRNA2:CHRNB2 and CHRNA2:CHRNB4 nAChR complexes are heteropentamers with two subtypes: LS (low agonist sensitivity) with a (CHRNA2)3:(CHRNB2/4)2 and HS (high agonist sensitivity) with a (CHRNA2)2:(CHRNB2/4)3 stoichiometries; the subtypes differ in their subunit binding interfaces which are involved in ligand binding.

The protein localises to the synaptic cell membrane. The protein resides in the cell membrane. It catalyses the reaction Ca(2+)(in) = Ca(2+)(out). The catalysed reaction is K(+)(in) = K(+)(out). The enzyme catalyses Na(+)(in) = Na(+)(out). In terms of biological role, component of neuronal acetylcholine receptors (nAChRs) that function as pentameric, ligand-gated cation channels with high calcium permeability among other activities. nAChRs are excitatory neurotrasnmitter receptors formed by a collection of nAChR subunits known to mediate synaptic transmission in the nervous system and the neuromuscular junction. Each nAchR subunit confers differential attributes to channel properties, including activation, deactivation and desensitization kinetics, pH sensitivity, cation permeability, and binding to allosteric modulators. CHRNA2 forms heteropentameric neuronal acetylcholine receptors with CHRNB2 and CHRNB4 and plays a role in nicotine dependence. The protein is Neuronal acetylcholine receptor subunit alpha-2 of Homo sapiens (Human).